The chain runs to 469 residues: RNA-editing ligase 1, mitochondrial (469 aa).

A mitochondrion-targeting transit peptide spans 1–44 (MQLQRLGAPLLKRLVGGCIRQSTAPIMPCVVVSGSGGFLTPVRT). ATP is bound by residues 59–61 (IEI), 86–92 (EKVHGTN), N92, R111, E159, F209, and 307–309 (KLR). K87 acts as the N6-AMP-lysine intermediate in catalysis. The segment at 450–469 (AAAQSEAIPPLSPAAPTKGE) is disordered.

This sequence belongs to the RNA ligase 2 family. In terms of assembly, component of the RNA editing complex (editosome), a 1600 kDa complex composed of at least 20 proteins. Interacts with terminal uridylyltransferase MEAT1.

Its subcellular location is the mitochondrion. It catalyses the reaction ATP + (ribonucleotide)n-3'-hydroxyl + 5'-phospho-(ribonucleotide)m = (ribonucleotide)n+m + AMP + diphosphate.. Functionally, essential for RNA editing. RNA editing in kinetoplastid mitochondria inserts and deletes uridylates at multiple sites in pre-mRNAs as directed by guide RNAs. The sequence is that of RNA-editing ligase 1, mitochondrial (REL1) from Trypanosoma brucei brucei (strain 927/4 GUTat10.1).